Consider the following 493-residue polypeptide: Dipeptide permease D (493 aa).

The next 13 helical transmembrane spans lie at 14–34 (VVAL…LLIL), 49–69 (ELFS…GYLA), 91–111 (LVLG…AIIV), 138–158 (GGFS…PIAC), 167–187 (WAMG…IFLC), 212–232 (NWGW…VLFW), 235–255 (WSVY…AKIY), 267–287 (LGLI…AQQG), 312–332 (MFQS…AWLV), 344–364 (IWGK…ILTL), 379–399 (LMVL…PVAM), 413–433 (VLTG…AGVI), and 458–478 (VFEQ…LIWL).

It belongs to the major facilitator superfamily. Proton-dependent oligopeptide transporter (POT/PTR) (TC 2.A.17) family. DtpD subfamily.

Its subcellular location is the cell inner membrane. Its function is as follows. Probable proton-dependent permease that transports dipeptides. This is Dipeptide permease D from Salmonella typhimurium (strain 14028s / SGSC 2262).